Here is a 205-residue protein sequence, read N- to C-terminus: Ribonuclease HII (205 aa).

Residues 15–205 (SQVCGIDEAG…SFKLRKLGEK (191 aa)) form the RNase H type-2 domain. 3 residues coordinate a divalent metal cation: Asp21, Glu22, and Asp117.

Belongs to the RNase HII family. It depends on Mn(2+) as a cofactor. Mg(2+) is required as a cofactor.

The protein localises to the cytoplasm. The catalysed reaction is Endonucleolytic cleavage to 5'-phosphomonoester.. In terms of biological role, endonuclease that specifically degrades the RNA of RNA-DNA hybrids. The protein is Ribonuclease HII of Chlorobaculum tepidum (strain ATCC 49652 / DSM 12025 / NBRC 103806 / TLS) (Chlorobium tepidum).